The following is a 743-amino-acid chain: MMTQANAYFYDGADVALLNGQYTDVFSLLGMHSANEGKALIVRCFLRNALSVDVISIKDGRKVASLDKVNEQGLFAGTLGRRVKPFLYLLRVEYPLCQLDIVDPYQFDSLLNSDDIYLFGEGSAERAYEFLGANWRQTQGVEGVHFCVWAPNAKRVSVVGDFNHWDDTRHVMRQHLANGLWELFLPNVVEGAHYKFDLVYQNGERHTKSDPMATQMECAPHNASIVPPKAHHSWNDTAWMSKRAATAWHKAPMSAYEVHLGSWRRKGEQGEQYLDYQDLIEQLIPYVKEQGFTHIELMPISEFPFDGSWGYQPVGLYAPTHRFGDANGLKAFVDACHQAGIGIILDWVSAHFPKDPHGLVRFDGTCLYEHEDPRKGTHPDWDTLIYNYDRGEVRSFLLSNACYWLREFHFDGLRLDAVSSMLYLDYSREPGQWLPNAYGGRENLEAISFLQILNQRLYQAFPGICMIAEESTAFAGVTKPTDQQGLGFGFKWNMGWMNDSLSYLGRDPLYRQFHHHQLTFSLMYAYTEQFMLSVSHDEVVHGKGSLLHKIPGDDWQKFATLRAYYGFMWGHPGKKLLFMGCEFGQRNEWNHNQSLDWHLLAYEPHQGVQRWLKDLNQLYQDMPALSVQDYEGAGFSWLDCENSRDSIFTFVRYGLAGDAPLVFVINMTPQLHTGFRIGLPLAGDYREYLNSDSQIYGGSNQGNAGTVVAESLPWQGMAQSALITVPPLGCLVIGPATGLAEAN.

Catalysis depends on D416, which acts as the Nucleophile. Residue E469 is the Proton donor of the active site.

It belongs to the glycosyl hydrolase 13 family. GlgB subfamily. In terms of assembly, monomer.

The enzyme catalyses Transfers a segment of a (1-&gt;4)-alpha-D-glucan chain to a primary hydroxy group in a similar glucan chain.. It functions in the pathway glycan biosynthesis; glycogen biosynthesis. Its function is as follows. Catalyzes the formation of the alpha-1,6-glucosidic linkages in glycogen by scission of a 1,4-alpha-linked oligosaccharide from growing alpha-1,4-glucan chains and the subsequent attachment of the oligosaccharide to the alpha-1,6 position. In Shewanella baltica (strain OS195), this protein is 1,4-alpha-glucan branching enzyme GlgB.